We begin with the raw amino-acid sequence, 415 residues long: Gamma-glutamyl phosphate reductase (415 aa).

It belongs to the gamma-glutamyl phosphate reductase family.

The protein localises to the cytoplasm. It catalyses the reaction L-glutamate 5-semialdehyde + phosphate + NADP(+) = L-glutamyl 5-phosphate + NADPH + H(+). It participates in amino-acid biosynthesis; L-proline biosynthesis; L-glutamate 5-semialdehyde from L-glutamate: step 2/2. Its function is as follows. Catalyzes the NADPH-dependent reduction of L-glutamate 5-phosphate into L-glutamate 5-semialdehyde and phosphate. The product spontaneously undergoes cyclization to form 1-pyrroline-5-carboxylate. The protein is Gamma-glutamyl phosphate reductase of Ligilactobacillus salivarius (strain UCC118) (Lactobacillus salivarius).